The chain runs to 228 residues: DNA-3-methyladenine glycosylase 1 (228 aa).

The active-site Proton acceptor is Asp-170.

The protein belongs to the alkylbase DNA glycosidase AlkA family.

The catalysed reaction is Hydrolysis of alkylated DNA, releasing 3-methyladenine, 3-methylguanine, 7-methylguanine and 7-methyladenine.. In terms of biological role, hydrolysis of the deoxyribose N-glycosidic bond to excise 3-methyladenine or 7-methyladenine from the damaged DNA polymer formed by alkylation lesions. Can release ethylated and propylated bases from DNA in addition to 3-methyladenine. The polypeptide is DNA-3-methyladenine glycosylase 1 (mag1) (Schizosaccharomyces pombe (strain 972 / ATCC 24843) (Fission yeast)).